A 53-amino-acid chain; its full sequence is Alpha-1-antiproteinase 1 (53 aa).

Residues E1–L28 form a disordered region.

Belongs to the serpin family. N-glycosylated; contains biantennary glycans. In terms of tissue distribution, plasma.

The protein localises to the secreted. The protein is Alpha-1-antiproteinase 1 of Equus caballus (Horse).